The following is a 268-amino-acid chain: tRNA pseudouridine synthase A (268 aa).

Aspartate 54 serves as the catalytic Nucleophile. Tyrosine 112 is a substrate binding site.

The protein belongs to the tRNA pseudouridine synthase TruA family. As to quaternary structure, homodimer.

The enzyme catalyses uridine(38/39/40) in tRNA = pseudouridine(38/39/40) in tRNA. In terms of biological role, formation of pseudouridine at positions 38, 39 and 40 in the anticodon stem and loop of transfer RNAs. The sequence is that of tRNA pseudouridine synthase A from Bordetella petrii (strain ATCC BAA-461 / DSM 12804 / CCUG 43448).